A 223-amino-acid polypeptide reads, in one-letter code: Twisted gastrulation protein homolog 1 (223 aa).

A signal peptide spans 1-25 (MKLHYVAVLTLAILMFLTWLPESLS). 2 N-linked (GlcNAc...) asparagine glycosylation sites follow: Asn52 and Asn81.

It belongs to the twisted gastrulation protein family. Interacts with CHRD and BMP4. This interaction enhances CHRD/BMP4 complex formation. Interacts with BMP7.

The protein resides in the secreted. Its function is as follows. May be involved in dorsoventral axis formation. Seems to antagonize BMP signaling by forming ternary complexes with CHRD and BMPs, thereby preventing BMPs from binding to their receptors. In addition to the anti-BMP function, also has pro-BMP activity, partly mediated by cleavage and degradation of CHRD, which releases BMPs from ternary complexes. May be an important modulator of BMP-regulated cartilage development and chondrocyte differentiation. May play a role in thymocyte development. This Homo sapiens (Human) protein is Twisted gastrulation protein homolog 1 (TWSG1).